Here is a 472-residue protein sequence, read N- to C-terminus: WASH complex subunit 1 (472 aa).

The required for WASH complex assembly stretch occupies residues 1–51; it reads MPQNRSMESQAYSLPLILPDLRREEAIHQITDTLQHLQTVSNDIFSRILQR. 3 disordered regions span residues 289-365, 377-412, and 426-472; these read ENSR…SDGR, GIGK…GDLM, and ISGK…DWES. Pro residues-rich tracts occupy residues 301–319 and 327–336; these read LPPP…PPEP and SLAPPLPIPA. The interval 352–472 is VCA; the sequence is QGAPKEVVNP…GDGDEEDWES (121 aa). Positions 364–386 constitute a WH2 domain; sequence GRASLLESIRQAGGIGKAKLRNV. A compositionally biased stretch (basic and acidic residues) spans 385–401; it reads NVKEKKLEKKKMKEQEQ.

It belongs to the WASH1 family. Component of the WASH complex.

The protein resides in the early endosome membrane. It is found in the recycling endosome membrane. Its function is as follows. Acts as a nucleation-promoting factor at the surface of endosomes, where it recruits and activates the Arp2/3 complex to induce actin polymerization, playing a key role in the fission of tubules that serve as transport intermediates during endosome sorting. The sequence is that of WASH complex subunit 1 from Xenopus tropicalis (Western clawed frog).